The chain runs to 801 residues: Ribosome biogenesis protein ERB1 (801 aa).

Disordered regions lie at residues 1-135 (MGSK…LEDR) and 358-377 (PEYL…DPED). Positions 35 to 90 (SEDEEDYIPSSEVDEDDDDDADESASEDSDDSNDSEDDEVEEDDEALLSDEIPSEG) are enriched in acidic residues. 3 stretches are compositionally biased toward basic and acidic residues: residues 91–113 (ESEK…KEPS), 124–135 (PPRKEDEELEDR), and 362–377 (PTKE…DPED). 2 WD repeats span residues 451-490 (GHEG…QVWS) and 494-534 (NGDE…VTPA). Residues 546–570 (GFGHATNGKQQANLPPGKEPPGKWA) are disordered. 5 WD repeats span residues 586–628 (TVRS…TQIP), 631–669 (KLNG…LVKI), 672–711 (PGAK…RPYK), 715–755 (FHTE…DQLE), and 771–801 (VNKL…RLWM).

It belongs to the WD repeat BOP1/ERB1 family. In terms of assembly, component of the NOP7 complex, composed of ERB1, NOP7 and YTM1. The complex is held together by ERB1, which interacts with NOP7 via its N-terminal domain and with YTM1 via a high-affinity interaction between the seven-bladed beta-propeller domains of the 2 proteins. The NOP7 complex associates with the 66S pre-ribosome.

Its subcellular location is the nucleus. It is found in the nucleolus. It localises to the nucleoplasm. Component of the NOP7 complex, which is required for maturation of the 25S and 5.8S ribosomal RNAs and formation of the 60S ribosome. The chain is Ribosome biogenesis protein ERB1 from Chaetomium thermophilum (strain DSM 1495 / CBS 144.50 / IMI 039719) (Thermochaetoides thermophila).